Consider the following 499-residue polypeptide: Cryptochrome-1 (499 aa).

FAD-binding positions include Arg190, Ser218, Ser220, Gln261, His328, 360–362 (DAD), Cys366, and Asn369.

This sequence belongs to the DNA photolyase class-1 family. As to quaternary structure, interacts with tim and per; promoted by light conditions. The cofactor is FAD.

It is found in the cytoplasm. The protein resides in the perinuclear region. The protein localises to the nucleus. Functionally, blue light-dependent regulator that is the input of the circadian feedback loop. Has no photolyase activity for cyclobutane pyrimidine dimers or 6-4 photoproducts. Regulation of expression by light suggests a role in photoreception for locomotor activity rhythms. Functions, together with per, as a transcriptional repressor required for the oscillation of peripheral circadian clocks and for the correct specification of clock cells. Genes directly activated by the transcription factors Clock (Clk) and cycle (cyc) are repressed by cry. In Culex quinquefasciatus (Southern house mosquito), this protein is Cryptochrome-1.